Reading from the N-terminus, the 141-residue chain is Endoribonuclease YbeY (141 aa).

Zn(2+) contacts are provided by histidine 105, histidine 109, and aspartate 115.

It belongs to the endoribonuclease YbeY family. It depends on Zn(2+) as a cofactor.

The protein localises to the cytoplasm. Functionally, single strand-specific metallo-endoribonuclease involved in late-stage 70S ribosome quality control and in maturation of the 3' terminus of the 16S rRNA. This is Endoribonuclease YbeY from Chloroherpeton thalassium (strain ATCC 35110 / GB-78).